A 365-amino-acid chain; its full sequence is Caffeic acid 3-O-methyltransferase (365 aa).

Methionine 130 to leucine 136 contacts substrate. The tract at residues alanine 162–methionine 180 is substrate binding. Positions 208, 231, 251, 252, and 265 each coordinate S-adenosyl-L-methionine. Histidine 269 serves as the catalytic Proton acceptor.

It belongs to the class I-like SAM-binding methyltransferase superfamily. Cation-independent O-methyltransferase family. COMT subfamily. As to quaternary structure, homodimer.

It catalyses the reaction (E)-caffeate + S-adenosyl-L-methionine = (E)-ferulate + S-adenosyl-L-homocysteine + H(+). It functions in the pathway aromatic compound metabolism; phenylpropanoid biosynthesis. Functionally, catalyzes the conversion of caffeic acid to ferulic acid and of 5-hydroxyferulic acid to sinapic acid. The resulting products may subsequently be converted to the corresponding alcohols that are incorporated into lignins. The protein is Caffeic acid 3-O-methyltransferase (COMT1) of Rosa chinensis (China rose).